The following is a 143-amino-acid chain: Large ribosomal subunit protein uL11 (143 aa).

It belongs to the universal ribosomal protein uL11 family. Part of the ribosomal stalk of the 50S ribosomal subunit. Interacts with L10 and the large rRNA to form the base of the stalk. L10 forms an elongated spine to which L12 dimers bind in a sequential fashion forming a multimeric L10(L12)X complex. Post-translationally, one or more lysine residues are methylated.

Functionally, forms part of the ribosomal stalk which helps the ribosome interact with GTP-bound translation factors. This Bordetella pertussis (strain Tohama I / ATCC BAA-589 / NCTC 13251) protein is Large ribosomal subunit protein uL11.